A 231-amino-acid chain; its full sequence is 5'-methylthioadenosine/S-adenosylhomocysteine nucleosidase (231 aa).

Catalysis depends on glutamate 12, which acts as the Proton acceptor. Residues glycine 78, isoleucine 153, and methionine 174–glutamate 175 contribute to the substrate site. Catalysis depends on aspartate 198, which acts as the Proton donor.

It belongs to the PNP/UDP phosphorylase family. MtnN subfamily.

It catalyses the reaction S-adenosyl-L-homocysteine + H2O = S-(5-deoxy-D-ribos-5-yl)-L-homocysteine + adenine. It carries out the reaction S-methyl-5'-thioadenosine + H2O = 5-(methylsulfanyl)-D-ribose + adenine. The catalysed reaction is 5'-deoxyadenosine + H2O = 5-deoxy-D-ribose + adenine. It participates in amino-acid biosynthesis; L-methionine biosynthesis via salvage pathway; S-methyl-5-thio-alpha-D-ribose 1-phosphate from S-methyl-5'-thioadenosine (hydrolase route): step 1/2. In terms of biological role, catalyzes the irreversible cleavage of the glycosidic bond in both 5'-methylthioadenosine (MTA) and S-adenosylhomocysteine (SAH/AdoHcy) to adenine and the corresponding thioribose, 5'-methylthioribose and S-ribosylhomocysteine, respectively. Also cleaves 5'-deoxyadenosine, a toxic by-product of radical S-adenosylmethionine (SAM) enzymes, into 5-deoxyribose and adenine. In Shewanella sp. (strain W3-18-1), this protein is 5'-methylthioadenosine/S-adenosylhomocysteine nucleosidase.